A 443-amino-acid polypeptide reads, in one-letter code: FAD-dependent monooxygenase orf3 (443 aa).

The chain crosses the membrane as a helical span at residues serine 5 to leucine 25. Residues glutamate 35 and glycine 48 each coordinate FAD. N-linked (GlcNAc...) asparagine glycans are attached at residues asparagine 75 and asparagine 87. Arginine 116 contacts FAD. Residue arginine 199 is part of the active site. FAD contacts are provided by aspartate 315 and alanine 328.

It belongs to the paxM FAD-dependent monooxygenase family. It depends on FAD as a cofactor.

The protein resides in the membrane. It participates in secondary metabolite biosynthesis. In terms of biological role, FAD-dependent monooxygenase; part of the gene cluster that mediates the biosynthesis of nigerpyrone and its derivatives carbonarone A and pestalamide A. The biosynthesis pathway begins with the polyketide assembly by epaA to form phenylacetyl triketide precursor from successive condensation of two malonyl-CoA, presumably with one phenylacetyl-CoA starter unit produced by the phenylacetyl-CoA ligase epaB. For the nigerpyrone biosynthesis, the reactive polyketide chain is released as an aldehyde through the R-domain. A nonenzymatic cyclization and dehydration may create nigerpyrone. For the biosynthesis of carbonarone A and pestalamide A, an extra methyl group is added through the C-methyltransferase domain. Several further steps involving the dehydrogenase orf1, the cytochrome P450 monooxygenase orf2 and the FAD-dependent monooxygenase orf3 are required to form a carbonarone A precursor which is converted to carbonarone A via cyclization. The O-acetyltransferase epaC could catalyze the transfer of 2-methylsuccinyl-CoA, a common intermediate in the ethylmalonyl-CoA pathway, to generate the final product pestalamide A. The polypeptide is FAD-dependent monooxygenase orf3 (Aspergillus niger (strain ATCC MYA-4892 / CBS 513.88 / FGSC A1513)).